Consider the following 225-residue polypeptide: Methyl-CpG-binding domain-containing protein 6 (225 aa).

Positions 25–92 (GDGTLDSSAK…PGWRVEDKIR (68 aa)) are disordered. The region spanning 71–146 (RKRAAPGDNW…ENTYFNPDHF (76 aa)) is the MBD domain.

Homodimer and heterodimer with MBD5. Interacts with DDM1 via its MBD domain. Interacts with NTF2, RPS2C, HDA6 and AGO4. In terms of tissue distribution, expressed in rosette leaves, buds, flowers, stems, mature seeds and roots.

The protein localises to the nucleus. It localises to the chromosome. Its subcellular location is the nucleolus. Transcriptional regulator that binds CpG, CpNpN and CpNpG (N is A, T, or C) islands in promoters regardless the DNA methylation status. Plays probably a role in gene silencing. May associate with histone deacetylase proteins (HDAC). Required for nucleolar dominance that consist in the silencing of rRNA genes inherited from one progenitor in genetic hybrids. Recruited to rRNA genes in a DRM2-dependent manner. Maintains gene silencing by interacting with RNA binding proteins (e.g. NTF2, RPS2C, HDA6 and AGO4) and by regulating DNA methylation status. This Arabidopsis thaliana (Mouse-ear cress) protein is Methyl-CpG-binding domain-containing protein 6.